The sequence spans 132 residues: Small ribosomal subunit protein uS8 (132 aa).

It belongs to the universal ribosomal protein uS8 family. Part of the 30S ribosomal subunit. Contacts proteins S5 and S12.

One of the primary rRNA binding proteins, it binds directly to 16S rRNA central domain where it helps coordinate assembly of the platform of the 30S subunit. In Christiangramia forsetii (strain DSM 17595 / CGMCC 1.15422 / KT0803) (Gramella forsetii), this protein is Small ribosomal subunit protein uS8.